Consider the following 392-residue polypeptide: Chorismate synthase (392 aa).

Positions 40 and 46 each coordinate NADP(+). FMN is bound by residues 135–137, 256–257, glycine 300, 315–319, and arginine 341; these read RAS, QA, and KPIST.

This sequence belongs to the chorismate synthase family. In terms of assembly, homotetramer. FMNH2 is required as a cofactor.

It catalyses the reaction 5-O-(1-carboxyvinyl)-3-phosphoshikimate = chorismate + phosphate. It functions in the pathway metabolic intermediate biosynthesis; chorismate biosynthesis; chorismate from D-erythrose 4-phosphate and phosphoenolpyruvate: step 7/7. Catalyzes the anti-1,4-elimination of the C-3 phosphate and the C-6 proR hydrogen from 5-enolpyruvylshikimate-3-phosphate (EPSP) to yield chorismate, which is the branch point compound that serves as the starting substrate for the three terminal pathways of aromatic amino acid biosynthesis. This reaction introduces a second double bond into the aromatic ring system. This Acidothermus cellulolyticus (strain ATCC 43068 / DSM 8971 / 11B) protein is Chorismate synthase.